The primary structure comprises 141 residues: Hemoglobin subunit alpha-1 (141 aa).

Residues 1 to 141 (VLTEDDKNHI…VAKTLVAHYR (141 aa)) form the Globin domain. His-58 contacts O2. Residue His-87 coordinates heme b.

This sequence belongs to the globin family. Heterotetramer of two alpha chains and two beta chains. As to expression, red blood cells.

In terms of biological role, involved in oxygen transport from the lung to the various peripheral tissues. In Iguana iguana (Common iguana), this protein is Hemoglobin subunit alpha-1.